The primary structure comprises 205 residues: Holliday junction resolvase RecU (205 aa).

Mg(2+) contacts are provided by threonine 83, aspartate 85, glutamate 98, and glutamine 117.

The protein belongs to the RecU family. Mg(2+) serves as cofactor.

It is found in the cytoplasm. It carries out the reaction Endonucleolytic cleavage at a junction such as a reciprocal single-stranded crossover between two homologous DNA duplexes (Holliday junction).. In terms of biological role, endonuclease that resolves Holliday junction intermediates in genetic recombination. Cleaves mobile four-strand junctions by introducing symmetrical nicks in paired strands. Promotes annealing of linear ssDNA with homologous dsDNA. Required for DNA repair, homologous recombination and chromosome segregation. This Streptococcus suis (strain 98HAH33) protein is Holliday junction resolvase RecU.